Here is a 199-residue protein sequence, read N- to C-terminus: Probable adenylyl-sulfate kinase (199 aa).

34–41 (GLSGSGKS) is a binding site for ATP. Residue Ser108 is the Phosphoserine intermediate of the active site.

This sequence belongs to the APS kinase family.

It catalyses the reaction adenosine 5'-phosphosulfate + ATP = 3'-phosphoadenylyl sulfate + ADP + H(+). Its pathway is sulfur metabolism; hydrogen sulfide biosynthesis; sulfite from sulfate: step 2/3. Catalyzes the synthesis of activated sulfate. The protein is Probable adenylyl-sulfate kinase (yisZ) of Bacillus subtilis (strain 168).